Reading from the N-terminus, the 310-residue chain is D-alanyl-D-alanine endopeptidase (310 aa).

Positions 1–25 are cleaved as a signal peptide; the sequence is MPKFRVSLFSLALMLAVPFAPQAVA. Catalysis depends on Ser-67, which acts as the Acyl-ester intermediate. The Proton acceptor role is filled by Lys-70. Ser-124 is an active-site residue. Lys-231 serves as a coordination point for substrate.

It belongs to the peptidase S11 family. Pbp8 is a proteolytic product of Pbp7.

It is found in the periplasm. In terms of biological role, cell wall formation. May play a specialized role in remodeling the cell wall. Specifically hydrolyzes the DD-diaminopimelate-alanine bonds in high-molecular-mass murein sacculi. The sequence is that of D-alanyl-D-alanine endopeptidase (pbpG) from Escherichia coli (strain K12).